The primary structure comprises 231 residues: Large ribosomal subunit protein uL1 (231 aa).

This sequence belongs to the universal ribosomal protein uL1 family. In terms of assembly, part of the 50S ribosomal subunit.

Binds directly to 23S rRNA. The L1 stalk is quite mobile in the ribosome, and is involved in E site tRNA release. Its function is as follows. Protein L1 is also a translational repressor protein, it controls the translation of the L11 operon by binding to its mRNA. In Francisella tularensis subsp. tularensis (strain WY96-3418), this protein is Large ribosomal subunit protein uL1.